Reading from the N-terminus, the 156-residue chain is Ribosomal RNA large subunit methyltransferase H (156 aa).

S-adenosyl-L-methionine contacts are provided by residues Leu-73, Gly-104, and 123–128; that span reads LSPLTL.

The protein belongs to the RNA methyltransferase RlmH family. In terms of assembly, homodimer.

The protein resides in the cytoplasm. It carries out the reaction pseudouridine(1915) in 23S rRNA + S-adenosyl-L-methionine = N(3)-methylpseudouridine(1915) in 23S rRNA + S-adenosyl-L-homocysteine + H(+). Functionally, specifically methylates the pseudouridine at position 1915 (m3Psi1915) in 23S rRNA. The polypeptide is Ribosomal RNA large subunit methyltransferase H (Edwardsiella ictaluri (strain 93-146)).